Consider the following 101-residue polypeptide: Small ribosomal subunit protein uS14 (101 aa).

It belongs to the universal ribosomal protein uS14 family. As to quaternary structure, part of the 30S ribosomal subunit. Contacts proteins S3 and S10.

Binds 16S rRNA, required for the assembly of 30S particles and may also be responsible for determining the conformation of the 16S rRNA at the A site. This chain is Small ribosomal subunit protein uS14, found in Chlamydia abortus (strain DSM 27085 / S26/3) (Chlamydophila abortus).